A 565-amino-acid polypeptide reads, in one-letter code: Mediator of RNA polymerase II transcription subunit 1 (565 aa).

The segment at 141-170 (SGNNLGSGNGTNGSSLTNKTDKKSVSSGNG) is disordered.

It belongs to the Mediator complex subunit 1 family. In terms of assembly, component of the Mediator complex.

It is found in the nucleus. Component of the Mediator complex, a coactivator involved in the regulated transcription of nearly all RNA polymerase II-dependent genes. Mediator functions as a bridge to convey information from gene-specific regulatory proteins to the basal RNA polymerase II transcription machinery. Mediator is recruited to promoters by direct interactions with regulatory proteins and serves as a scaffold for the assembly of a functional preinitiation complex with RNA polymerase II and the general transcription factors. This is Mediator of RNA polymerase II transcription subunit 1 (MED1) from Candida glabrata (strain ATCC 2001 / BCRC 20586 / JCM 3761 / NBRC 0622 / NRRL Y-65 / CBS 138) (Yeast).